A 343-amino-acid chain; its full sequence is Sulfate/thiosulfate import ATP-binding protein CysA (343 aa).

The 231-residue stretch at 3–233 (ILIENISKTF…PATPFVMGFM (231 aa)) folds into the ABC transporter domain. 35–42 (GPSGSGKS) is an ATP binding site.

It belongs to the ABC transporter superfamily. Sulfate/tungstate importer (TC 3.A.1.6) family.

The protein localises to the plastid. The protein resides in the chloroplast. It catalyses the reaction sulfate(out) + ATP + H2O = sulfate(in) + ADP + phosphate + H(+). The enzyme catalyses thiosulfate(out) + ATP + H2O = thiosulfate(in) + ADP + phosphate + H(+). Part of the ABC transporter complex involved in sulfate/thiosulfate import. Responsible for energy coupling to the transport system. The chain is Sulfate/thiosulfate import ATP-binding protein CysA from Nephroselmis olivacea (Green alga).